The primary structure comprises 587 residues: Proline-rich protein 14 (587 aa).

At Met-1 the chain carries N-acetylmethionine. Polar residues predominate over residues 1–11 (MDLPGDSSTPG). Disordered regions lie at residues 1–48 (MDLP…EKAS), 65–152 (VPLE…HQPT), and 181–241 (ARRA…RPRL). The sufficient for heterochromatin association in interphase and chromatin association in anaphase stretch occupies residues 1–135 (MDLPGDSSTP…TPRRQSRTTP (135 aa)). The required for the interaction with GRB2 and sufficient to promote the phosphorylation of AKT and cell proliferation stretch occupies residues 85–378 (SVRSQPPASP…MAKAPPPPRP (294 aa)). Residues 136-365 (GPDEGPSQKV…RPRPRRHTVG (230 aa)) form a required for nuclear lamina association region. A compositionally biased stretch (low complexity) spans 200–214 (LPAPSRPSALSANPL). Pro residues predominate over residues 215–234 (ASPPPAPDPVLEPPSTPPPS). Ser-277 is modified (phosphoserine). Disordered regions lie at residues 290-444 (EAGQ…IGKV) and 524-587 (FRDS…PHRT). Polar residues predominate over residues 314-325 (AQDQNPSATLTK). Pro residues predominate over residues 337 to 356 (LGPPGPDPCSWPPVPAPSSR). The segment covering 398-410 (TSCSSTASTSSFS) has biased composition (low complexity). The tract at residues 519 to 536 (RRTVEFRDSSLPRSRRPS) is required for nuclear localization. Over residues 538–548 (GARATAGRTLP) the composition is skewed to low complexity. Residues 572–581 (LLEEEEEGDQ) are compositionally biased toward acidic residues.

Interacts (via proline-rich region) with GRB2 (via SH3 domain 2). Interacts (via N-terminus) with CBX5.

It is found in the chromosome. Its subcellular location is the nucleus. The protein localises to the nucleus lamina. It localises to the nucleoplasm. Functionally, functions in tethering peripheral heterochromatin to the nuclear lamina during interphase, possibly through the interaction with heterochromatin protein CBX5/HP1 alpha. Might play a role in reattaching heterochromatin to the nuclear lamina at mitotic exit. Promotes myoblast differentiation during skeletal myogenesis, possibly by stimulating transcription factor MyoD activity via binding to CBX5/HP1 alpha. Involved in the positive regulation of the PI3K-Akt-mTOR signaling pathway and in promoting cell proliferation, possibly via binding to GRB2. The protein is Proline-rich protein 14 (PRR14) of Bos taurus (Bovine).